Consider the following 220-residue polypeptide: Large ribosomal subunit protein uL16z (220 aa).

Belongs to the universal ribosomal protein uL16 family. In terms of assembly, component of the small ribosomal subunit. Mature ribosomes consist of a small (40S) and a large (60S) subunit. The 40S subunit contains about 33 different proteins and 1 molecule of RNA (18S). The 60S subunit contains about 49 different proteins and 3 molecules of RNA (25S, 5.8S and 5S). Interacts with NIK1. Interacts with LIMYB. In terms of processing, phosphorylated by NIK1 and NIK2 in vitro. As to expression, ubiquitous, with the highest expression in flowers. Expressed in seedlings, leaves, roots, stems and flowers. Expressed in young leaves, mostly in dividing cells and in the hydathodes, in the root tips and lateral root primordia, in pistils, anthers, and pollen grains, and in developing seeds.

The protein localises to the cytoplasm. It is found in the nucleus. Its function is as follows. Ribosomal protein involved in translational regulation. Contribute to general translation under UV-B stress. Involved in the NIK1-mediated defense response to geminivirus infection. Acts coordinately with LIMYB as a transcriptional repressor. In Arabidopsis thaliana (Mouse-ear cress), this protein is Large ribosomal subunit protein uL16z.